A 312-amino-acid chain; its full sequence is Small ribosomal subunit biogenesis GTPase RsgA (312 aa).

The CP-type G domain occupies 86–245; it reads QSFLKRPAVA…LADTPGFNRP (160 aa). GTP contacts are provided by residues 135 to 138 and 187 to 195; these read TKID and GPSGVGKTS. Positions 270, 275, 277, and 283 each coordinate Zn(2+).

This sequence belongs to the TRAFAC class YlqF/YawG GTPase family. RsgA subfamily. In terms of assembly, monomer. Associates with 30S ribosomal subunit, binds 16S rRNA. Zn(2+) is required as a cofactor.

It localises to the cytoplasm. In terms of biological role, one of several proteins that assist in the late maturation steps of the functional core of the 30S ribosomal subunit. Helps release RbfA from mature subunits. May play a role in the assembly of ribosomal proteins into the subunit. Circularly permuted GTPase that catalyzes slow GTP hydrolysis, GTPase activity is stimulated by the 30S ribosomal subunit. The sequence is that of Small ribosomal subunit biogenesis GTPase RsgA from Prochlorococcus marinus (strain NATL2A).